Reading from the N-terminus, the 218-residue chain is Monomethylamine corrinoid protein 2 (218 aa).

The B12-binding N-terminal domain occupies 1 to 91 (MTNTEIFNKL…ELEKTKVEGE (91 aa)). One can recognise a B12-binding domain in the interval 94–218 (TGLAITFVAE…AAKVALNVMK (125 aa)). His-107 lines the methylcob(III)alamin pocket.

It belongs to the methylamine corrinoid protein family. In terms of assembly, can form a complex with MtmB.

The protein operates within one-carbon metabolism; methanogenesis from methylamine. In terms of biological role, acts as a methyl group carrier between MtmB and MtbA. In Methanosarcina mazei (strain ATCC BAA-159 / DSM 3647 / Goe1 / Go1 / JCM 11833 / OCM 88) (Methanosarcina frisia), this protein is Monomethylamine corrinoid protein 2 (mtmC2).